A 365-amino-acid polypeptide reads, in one-letter code: Elongation factor Tu (365 aa).

Residues 1–7, 62–66, and 117–120 each bind GTP; these read HVDHGKT, DCPGH, and NKCD. The 185-residue stretch at 1-185 folds into the tr-type G domain; it reads HVDHGKTTLT…TLDSYIPTPE (185 aa). T7 serves as a coordination point for Mg(2+).

This sequence belongs to the TRAFAC class translation factor GTPase superfamily. Classic translation factor GTPase family. EF-Tu/EF-1A subfamily. In terms of assembly, monomer.

It is found in the cytoplasm. The enzyme catalyses GTP + H2O = GDP + phosphate + H(+). Functionally, GTP hydrolase that promotes the GTP-dependent binding of aminoacyl-tRNA to the A-site of ribosomes during protein biosynthesis. The sequence is that of Elongation factor Tu from Buchnera aphidicola subsp. Schlechtendalia chinensis.